The following is a 121-amino-acid chain: Amelogenin (121 aa).

Disordered stretches follow at residues 1–20 (LHHQ…HALQ) and 32–121 (QPMQ…WPAT). Residues 48 to 58 (SVTPTQHHQSN) show a composition bias toward polar residues. Positions 59 to 71 (LPQPAQQPFQPQV) are enriched in low complexity. Residues 85–111 (PAHPMPPMPQPPLPPMFPMQPLPPLLP) are compositionally biased toward pro residues.

It belongs to the amelogenin family.

The protein resides in the secreted. Its subcellular location is the extracellular space. It localises to the extracellular matrix. Functionally, plays a role in the biomineralization of teeth. Seems to regulate the formation of crystallites during the secretory stage of tooth enamel development. Thought to play a major role in the structural organization and mineralization of developing enamel. In Ornithorhynchus anatinus (Duckbill platypus), this protein is Amelogenin (AMEL).